The sequence spans 110 residues: Protein P2 (110 aa).

Residues 72 to 82 (KLPTTSGSSSA) are compositionally biased toward polar residues. A disordered region spans residues 72–110 (KLPTTSGSSSAGAIVPAGSNTQGQYKAPPKKGIKRKYPA). Residues 99–110 (PPKKGIKRKYPA) show a composition bias toward basic residues.

The sequence is that of Protein P2 from Oryza sativa (Rice).